The chain runs to 210 residues: UPF0301 protein OCAR_7326/OCA5_c07920 (210 aa).

This sequence belongs to the UPF0301 (AlgH) family.

This chain is UPF0301 protein OCAR_7326/OCA5_c07920, found in Afipia carboxidovorans (strain ATCC 49405 / DSM 1227 / KCTC 32145 / OM5) (Oligotropha carboxidovorans).